The following is a 455-amino-acid chain: Venom prothrombin activator trocarin-D (455 aa).

The N-terminal stretch at 1-20 (MAPQLLLCLILTFLWSLPEA) is a signal peptide. Residues 21 to 40 (ESNVFLKSKVANRFLQRTKR) constitute a propeptide that is removed on maturation. One can recognise a Gla domain in the interval 41-86 (SNSLFEEIRPGNIERECIEEKCSKEEAREVFEDNEKTETFWNVYVD). Glutamate 46, glutamate 47, glutamate 54, glutamate 56, glutamate 59, glutamate 60, glutamate 65, glutamate 66, glutamate 69, glutamate 72, and glutamate 75 each carry 4-carboxyglutamate. A disulfide bridge connects residues cysteine 57 and cysteine 62. Positions 86–122 (DGDQCSSNPCHYRGTCKDGIGSYTCTCLPNYEGKNCE) constitute an EGF-like 1; calcium-binding domain. 11 disulfides stabilise this stretch: cysteine 90-cysteine 101, cysteine 95-cysteine 110, cysteine 112-cysteine 121, cysteine 129-cysteine 140, cysteine 136-cysteine 149, cysteine 151-cysteine 164, cysteine 172-cysteine 328, cysteine 216-cysteine 221, cysteine 236-cysteine 252, cysteine 376-cysteine 390, and cysteine 401-cysteine 429. O-linked (Hex...) serine glycosylation is present at serine 92. One can recognise an EGF-like 2 domain in the interval 129 to 164 (CRVDNGNCWHFCKRVQSETQCSCAESYRLGVDGHSC). Residues 182–209 (REASLPDFVQSQKATLLKKSDNPSPDIR) constitute a propeptide, activation peptide. The region spanning 210 to 453 (IVNGMDCKLG…FIPWIKKIMS (244 aa)) is the Peptidase S1 domain. Histidine 251 functions as the Charge relay system in the catalytic mechanism. The N-linked (GlcNAc...) asparagine glycan is linked to asparagine 254. Aspartate 308 (charge relay system) is an active-site residue. Serine 405 serves as the catalytic Charge relay system.

The protein belongs to the peptidase S1 family. Snake venom subfamily. As to quaternary structure, heterodimer of a light chain and a heavy chain; disulfide-linked. Gamma-carboxyglutamate residues are formed by vitamin K dependent carboxylation. These residues are essential for the binding of calcium. Post-translationally, the O-linked saccharides at Ser-92 are a mixture of Xyl-Glc, and Glc along with smaller amounts of Xyl-GlcNAc, GlcNAc, Gal, GalNAc, Xyl-Gal, and Xyl-GalNAc, suggesting that the glycosyl transferases responsible for this modification are non-specific. The N-linked carbohydrate at Asn-254 (Asn-45 of the heavy chain) is a sialylated and diantennary oligosaccharide. Expressed by the venom gland.

It is found in the secreted. The enzyme catalyses Selective cleavage of Arg-|-Thr and then Arg-|-Ile bonds in prothrombin to form thrombin.. Its activity is regulated as follows. Activated by calcium and phospholipids. In terms of biological role, snake prothrombin activator that attacks the hemostatic system of prey. This protein is functionally similar to blood coagulation factor Xa. Induces cyanosis and death in mice at 1 mg/kg body weight during blood clotting. The chain is Venom prothrombin activator trocarin-D from Tropidechis carinatus (Australian rough-scaled snake).